The primary structure comprises 383 residues: Adaptive-response sensory kinase SasA (383 aa).

A Histidine kinase domain is found at Met152–Gln365. His155 bears the Phosphohistidine; by autocatalysis mark.

As to quaternary structure, homooligomerizes. Interacts with KaiC. Participates in the KaiABC clock complex, whose core is composed of a KaiC homohexamer, 6 KaiB and up to 6 KaiA dimers. SasA and KaiB(fs) compete to bind to KaiC.

The enzyme catalyses ATP + protein L-histidine = ADP + protein N-phospho-L-histidine.. Member of the two-component regulatory system SasA/RpaA involved in genome-wide circadian gene expression. One of several clock output pathways. Participates in the Kai clock protein complex, the main circadian regulator in cyanobacteria, via its interaction with KaiC. KaiC enhances the autophosphorylation activity of SasA, which then transfers its phosphate group to RpaA to activate it. In addition to its output function, recruits fold-shifted KaiB (KaiB(fs)) to KaiC to cooperatively form the KaiB(6):KaiC(6) complex (independent of SasA kinase activity). Required for robustness of the circadian rhythm of gene expression and is involved in clock output, also required for adaptation to light/dark cycles. In Synechococcus sp. (strain CC9902), this protein is Adaptive-response sensory kinase SasA.